We begin with the raw amino-acid sequence, 201 residues long: Aminoglycoside N(6')-acetyltransferase type 1 (201 aa).

In terms of domain architecture, N-acetyltransferase spans 25 to 192 (VTLRLMTEHD…PAVYMVQTRQ (168 aa)). Residues W51 and D154 each contribute to the substrate site. Residue N159 participates in acetyl-CoA binding.

Homodimer.

It catalyses the reaction kanamycin B + acetyl-CoA = N(6')-acetylkanamycin B + CoA + H(+). Its function is as follows. Catalyzes the transfer of an acetyl group from acetyl-CoA to the 6'-amino group of aminoglycoside molecules conferring resistance to antibiotics containing the purpurosamine ring including amikacin. The protein is Aminoglycoside N(6')-acetyltransferase type 1 (aacA4) of Klebsiella pneumoniae.